The sequence spans 129 residues: Phenazine antibiotic resistance protein EhpR (129 aa).

The VOC domain maps to 10-128; it reads TPNLQLVYVS…DGHIIRVCPL (119 aa). D-alanylgriseoluteate is bound by residues 42-43 and W57; that span reads RY.

Homodimer.

Its function is as follows. Required for resistance to the phenazine antibiotic D-alanylgriseoluteic acid (AGA), an antibiotic produced by E.agglomerans itself, and thus protects the bacterium against phenazine toxicity. Probably binds AGA and acts as a chaperone that works in tandem with a membrane transporter for subsequent antibiotic secretion. The protein is Phenazine antibiotic resistance protein EhpR of Enterobacter agglomerans (Erwinia herbicola).